Here is a 101-residue protein sequence, read N- to C-terminus: Small ribosomal subunit protein uS14 (101 aa).

It belongs to the universal ribosomal protein uS14 family. Part of the 30S ribosomal subunit. Contacts proteins S3 and S10.

Binds 16S rRNA, required for the assembly of 30S particles and may also be responsible for determining the conformation of the 16S rRNA at the A site. The chain is Small ribosomal subunit protein uS14 from Brucella abortus (strain S19).